The following is a 279-amino-acid chain: Prephenate dehydratase (279 aa).

The region spanning 2–178 (KIAYLGPRGS…NSTRFWLLGK (177 aa)) is the Prephenate dehydratase domain. An ACT domain is found at 194-272 (LALTLPDNLP…VNVRLLGNYS (79 aa)).

It carries out the reaction prephenate + H(+) = 3-phenylpyruvate + CO2 + H2O. The protein operates within amino-acid biosynthesis; L-phenylalanine biosynthesis; phenylpyruvate from prephenate: step 1/1. The protein is Prephenate dehydratase (pheA) of Lactococcus lactis subsp. cremoris (strain MG1363).